Reading from the N-terminus, the 343-residue chain is Aspartate beta-hydroxylase domain-containing protein 2 (343 aa).

Residues 1–31 (MWLEWLVAWSWSLDGLRDCIATGIQSVRDCD) are Cytoplasmic-facing. Residues 32–52 (GTAVITVACLLVLFVWYCYHV) form a helical membrane-spanning segment. The Lumenal segment spans residues 53-343 (GREQPRPHVS…ALDFIFAPGR (291 aa)). N-linked (GlcNAc...) asparagine glycans are attached at residues asparagine 77 and asparagine 185. 2-oxoglutarate is bound by residues tryptophan 202 and serine 246. Histidine 257 lines the Fe cation pocket. 266-268 (RCH) contributes to the 2-oxoglutarate binding site. Histidine 302 lines the Fe cation pocket. Arginine 315 is a binding site for 2-oxoglutarate.

The protein belongs to the aspartyl/asparaginyl beta-hydroxylase family. It depends on Fe cation as a cofactor.

It is found in the membrane. Its function is as follows. May function as 2-oxoglutarate-dependent dioxygenase. This Rattus norvegicus (Rat) protein is Aspartate beta-hydroxylase domain-containing protein 2 (Asphd2).